Here is a 158-residue protein sequence, read N- to C-terminus: MAKATVVKKHNGGTIAQNKRARHDYFIEEKFEAGMSLLGWEVKSLRAGRMSLTESYVIFKNGEAFLFGAQIQPLLSASTHIVPEATRTRKLLLSRRELEKLMGAVNQKGYSCVPLACYWKGHLVKLEIALVKGKQLHDKRATEKERDWQRDKARIFHK.

Belongs to the SmpB family.

It localises to the cytoplasm. In terms of biological role, required for rescue of stalled ribosomes mediated by trans-translation. Binds to transfer-messenger RNA (tmRNA), required for stable association of tmRNA with ribosomes. tmRNA and SmpB together mimic tRNA shape, replacing the anticodon stem-loop with SmpB. tmRNA is encoded by the ssrA gene; the 2 termini fold to resemble tRNA(Ala) and it encodes a 'tag peptide', a short internal open reading frame. During trans-translation Ala-aminoacylated tmRNA acts like a tRNA, entering the A-site of stalled ribosomes, displacing the stalled mRNA. The ribosome then switches to translate the ORF on the tmRNA; the nascent peptide is terminated with the 'tag peptide' encoded by the tmRNA and targeted for degradation. The ribosome is freed to recommence translation, which seems to be the essential function of trans-translation. This Acinetobacter baumannii (strain AB307-0294) protein is SsrA-binding protein.